A 751-amino-acid chain; its full sequence is Collagen alpha-1(XIII) chain (751 aa).

Positions 1–24 (MVAERTRKAAASGSRGPGELGAPG) are disordered. The Cytoplasmic portion of the chain corresponds to 1 to 40 (MVAERTRKAAASGSRGPGELGAPGPGTVALAEQCARLPSP). The nonhelical region 1 (NC1) stretch occupies residues 1–119 (MVAERTRKAA…KMSPGCNCPP (119 aa)). The span at 15 to 24 (RGPGELGAPG) shows a compositional bias: gly residues. Residues 41–59 (GCCGLLALALCSLALSLLA) form a helical; Signal-anchor for type II membrane protein membrane-spanning segment. Residues 60 to 751 (HFRTAELQAR…GLPVQGCWNK (692 aa)) are Extracellular-facing. Disordered regions lie at residues 108–127 (APKM…PTGR), 190–225 (PGHP…EYPH), and 265–449 (TFQG…EMVD). Residues 116–125 (NCPPGPPGPT) are compositionally biased toward pro residues. A triple-helical region 1 (COL1) region spans residues 120 to 223 (GPPGPTGRPG…KGEKGQCGEY (104 aa)). The span at 204–213 (PRGQPGPQGQ) shows a compositional bias: low complexity. Residues 214–225 (KGEKGQCGEYPH) show a composition bias toward basic and acidic residues. Residues 224-273 (PHREYPGGMLAALRSNPIMSLKLLPLLNSVRLAPPPVIKRRTFQGEQSQT) are nonhelical region 2 (NC2). Positions 274-445 (GIQGPPGPPG…KGAKGEPGKG (172 aa)) are triple-helical region 2 (COL2). Pro residues-rich tracts occupy residues 278–288 (PPGPPGPPGPS), 296–312 (LPGP…PGPK), and 391–402 (PGPPGLPGPPGP). Positions 403–436 (KGEAGVDGQAGPPGQQGDKGQPGAAGEQGPSGPK) are enriched in low complexity. Residues 438–447 (AKGEPGKGEM) show a composition bias toward basic and acidic residues. The segment at 446 to 467 (EMVDYNGSINEALQEIRTLALM) is nonhelical region 3 (NC3). N451 carries N-linked (GlcNAc...) asparagine glycosylation. Positions 466–751 (LMGPPGLPGQ…GLPVQGCWNK (286 aa)) are disordered. Residues 468–733 (GPPGLPGQTG…KGDQGAPGLD (266 aa)) are triple-helical region 3 (COL3). Pro residues predominate over residues 470–484 (PGLPGQTGPPGPPGT). Composition is skewed to basic and acidic residues over residues 499–509 (HDGDKGPRGKP), 557–568 (TGEKGEPGDEGR), and 586–596 (EKGEAGEKGDP). Residues 601-613 (PGPPGPEGPPGPP) show a composition bias toward pro residues. Positions 615-628 (LQGFPGPKGEAGLE) are enriched in low complexity. Positions 630 to 643 (SKGEKGSQGEKGDR) are enriched in basic and acidic residues. Residues 658–673 (PGPPGTPGPIGVPGPA) show a composition bias toward pro residues. Positions 684–699 (DPGMTGPTGAAGLPGL) are enriched in low complexity. Residues 706 to 726 (KGNRGERGKKGSRGPKGDKGD) are compositionally biased toward basic and acidic residues. The segment at 734-751 (APCPLGEDGLPVQGCWNK) is nonhelical region 4 (NC4).

In terms of assembly, homotrimer; disulfide-linked. Nucleation of the type XIII collagen triple helix is likely to occur at the N-terminal region with triple helix formation proceeding from the N- to the C-terminus. Interacts with FN1, perlecan/HSPG2 and NID2.

The protein resides in the cell membrane. It is found in the postsynaptic cell membrane. Its function is as follows. Involved in cell-matrix and cell-cell adhesion interactions that are required for normal development. May participate in the linkage between muscle fiber and basement membrane. May play a role in endochondral ossification of bone and branching morphogenesis of lung. Binds heparin. At neuromuscular junctions, may play a role in acetylcholine receptor clustering. The chain is Collagen alpha-1(XIII) chain from Mus musculus (Mouse).